Here is a 520-residue protein sequence, read N- to C-terminus: DNA mismatch repair protein MutL (520 aa).

The protein belongs to the DNA mismatch repair MutL/HexB family.

This protein is involved in the repair of mismatches in DNA. It is required for dam-dependent methyl-directed DNA mismatch repair. May act as a 'molecular matchmaker', a protein that promotes the formation of a stable complex between two or more DNA-binding proteins in an ATP-dependent manner without itself being part of a final effector complex. The protein is DNA mismatch repair protein MutL of Persephonella marina (strain DSM 14350 / EX-H1).